Reading from the N-terminus, the 900-residue chain is Minor teichoic acid biosynthesis protein GgaB (900 aa).

The protein belongs to the glycosyltransferase 2 family.

It participates in cell wall biogenesis; poly(glucopyranosyl N-acetylgalactosamine 1-phosphate) teichoic acid biosynthesis. Its function is as follows. Involved in the biosynthesis of galactosamine-containing minor teichoic acid, a non-essential cell wall polymer in B.subtilis 168. The polypeptide is Minor teichoic acid biosynthesis protein GgaB (ggaB) (Bacillus subtilis (strain 168)).